Reading from the N-terminus, the 389-residue chain is uncharacterized protein (389 aa).

The first 29 residues, 1 to 29, serve as a signal peptide directing secretion; the sequence is MQPSFTPSGGKWLSIAVILLVIGLVVGFA.

Belongs to the bacterial solute-binding protein 1 family. WtpA subfamily.

This is an uncharacterized protein from Thermoplasma volcanium (strain ATCC 51530 / DSM 4299 / JCM 9571 / NBRC 15438 / GSS1).